A 338-amino-acid chain; its full sequence is Flap endonuclease 1 (338 aa).

An N-domain region spans residues 1–98 (MGTDIGDLLQ…ETLSRRKEVR (98 aa)). Positions 27, 80, 152, 154, 173, 175, and 236 each coordinate Mg(2+). An I-domain region spans residues 116 to 257 (AAYKYAQASS…TALKLIKKHG (142 aa)). Residues 330 to 338 (RQKTLDQWF) form an interaction with PCNA region.

Belongs to the XPG/RAD2 endonuclease family. FEN1 subfamily. Interacts with PCNA. PCNA stimulates the nuclease activity without altering cleavage specificity. Mg(2+) is required as a cofactor.

In terms of biological role, structure-specific nuclease with 5'-flap endonuclease and 5'-3' exonuclease activities involved in DNA replication and repair. During DNA replication, cleaves the 5'-overhanging flap structure that is generated by displacement synthesis when DNA polymerase encounters the 5'-end of a downstream Okazaki fragment. Binds the unpaired 3'-DNA end and kinks the DNA to facilitate 5' cleavage specificity. Cleaves one nucleotide into the double-stranded DNA from the junction in flap DNA, leaving a nick for ligation. Also involved in the base excision repair (BER) pathway. Acts as a genome stabilization factor that prevents flaps from equilibrating into structures that lead to duplications and deletions. Also possesses 5'-3' exonuclease activity on nicked or gapped double-stranded DNA. The polypeptide is Flap endonuclease 1 (Methanosarcina acetivorans (strain ATCC 35395 / DSM 2834 / JCM 12185 / C2A)).